Here is a 137-residue protein sequence, read N- to C-terminus: uncharacterized protein (137 aa).

The span at 1–10 shows a compositional bias: low complexity; it reads MISVDVPGHP. Residues 1-23 form a disordered region; sequence MISVDVPGHPGDAGGGGGGARKV. Gly residues predominate over residues 11–20; sequence GDAGGGGGGA.

This is an uncharacterized protein from Human adenovirus C serotype 2 (HAdV-2).